A 495-amino-acid polypeptide reads, in one-letter code: Protein-serine O-palmitoleoyltransferase porcupine (495 aa).

The next 8 membrane-spanning stretches (helical) occupy residues 46 to 66 (TQYI…VLIV), 92 to 112 (VIDH…AVQW), 184 to 204 (TVLS…GPWI), 232 to 252 (MLIH…FLLT), 358 to 378 (PFGT…LHGL), 403 to 422 (LATI…SCTV), 434 to 454 (VINM…GCIF), and 475 to 495 (TELN…YFVI). H376 is an active-site residue.

The protein belongs to the membrane-bound acyltransferase family. Porcupine subfamily.

It localises to the endoplasmic reticulum membrane. The catalysed reaction is [Wnt protein]-L-serine + (9Z)-hexadecenoyl-CoA = [Wnt protein]-O-(9Z)-hexadecenoyl-L-serine + CoA. In terms of biological role, protein-serine O-palmitoleoyltransferase that acts as a key regulator of the Wnt signaling pathway by mediating the attachment of palmitoleate, a 16-carbon monounsaturated fatty acid (C16:1(9Z)), to Wnt proteins. Serine palmitoleoylation of WNT proteins is required for efficient binding to frizzled receptors. The sequence is that of Protein-serine O-palmitoleoyltransferase porcupine from Anopheles gambiae (African malaria mosquito).